The sequence spans 447 residues: Dual specificity protein phosphatase CDC14C (447 aa).

An a region spans residues 14–168 (PQDDVYVDIT…AMQYGFLNFN (155 aa)). Residues 169 to 182 (SFNLDEYEHYEKAE) form a linker region. The b stretch occupies residues 183–349 (NGDLNWIIPD…EGDYFRQRLK (167 aa)). Positions 184 to 344 (GDLNWIIPDR…TSLWLEGDYF (161 aa)) constitute a Tyrosine-protein phosphatase domain. Residue C284 is the Phosphocysteine intermediate of the active site. A helical membrane pass occupies residues 426 to 446 (FTLCSVVIWWIVCDYILPILL).

It belongs to the protein-tyrosine phosphatase family. Non-receptor class CDC14 subfamily.

Its subcellular location is the endoplasmic reticulum membrane. It catalyses the reaction O-phospho-L-tyrosyl-[protein] + H2O = L-tyrosyl-[protein] + phosphate. The enzyme catalyses O-phospho-L-seryl-[protein] + H2O = L-seryl-[protein] + phosphate. It carries out the reaction O-phospho-L-threonyl-[protein] + H2O = L-threonyl-[protein] + phosphate. In terms of biological role, dual-specificity phosphatase. Preferentially dephosphorylates proteins modified by proline-directed kinases. This chain is Dual specificity protein phosphatase CDC14C, found in Homo sapiens (Human).